The primary structure comprises 270 residues: Myelin protein zero-like protein 1 (270 aa).

Residues 1–35 (MAEAVGAVTLIAAPARRRWLWSALAAMLGLLTARI) form the signal peptide. The Ig-like V-type domain occupies 36–151 (SALEVHTPKE…DIVVRPGQIR (116 aa)). The Extracellular segment spans residues 36–162 (SALEVHTPKE…HVVEIDNLLV (127 aa)). 2 N-linked (GlcNAc...) asparagine glycosylation sites follow: N50 and N130. Cysteines 58 and 135 form a disulfide. The chain crosses the membrane as a helical span at residues 163 to 183 (FLVWVVVGTVTAVVLGLTLLI). Topologically, residues 184-270 (SLVLVVLYRR…SVVYADIRKD (87 aa)) are cytoplasmic. The interval 201 to 257 (TGCSTSERLSPVKQAPRKCPSDTEGLVKSPPSAGSHQGPVIYAQLDHSGGHHSGKIN) is disordered. Phosphoserine occurs at positions 204, 206, 210, and 221. Residues 240-245 (VIYAQL) carry the ITIM motif 1 motif. Y242 is modified (phosphotyrosine). Position 261 is a phosphoserine (S261). An ITIM motif 2 motif is present at residues 262–267 (VVYADI). Y264 carries the post-translational modification Phosphotyrosine.

It belongs to the myelin P0 protein family. As to quaternary structure, interacts with phosphorylated PTPN11/SHP-2. Post-translationally, phosphorylated on tyrosine residues upon stimulation with pervanadate and concanavalin-A (ConA). Phosphorylation at Tyr-242 and Tyr-264 is required for interaction with PTPN11/SHP-2. Dephosphorylated by PTPN11/SHP-2 (in vitro). In terms of processing, N-glycosylated.

It is found in the membrane. Its function is as follows. Cell surface receptor, which is involved in signal transduction processes. Recruits PTPN11/SHP-2 to the cell membrane and is a putative substrate of PTPN11/SHP-2. Is a major receptor for concanavalin-A (ConA) and is involved in cellular signaling induced by ConA, which probably includes Src family tyrosine-protein kinases. May be involved in regulation of integrin-mediated cell motility. The chain is Myelin protein zero-like protein 1 (Mpzl1) from Rattus norvegicus (Rat).